We begin with the raw amino-acid sequence, 610 residues long: Glutamine--fructose-6-phosphate aminotransferase [isomerizing] (610 aa).

Cys2 serves as the catalytic Nucleophile; for GATase activity. The Glutamine amidotransferase type-2 domain occupies 2-218 (CGIVGAVAQR…EGDVAEITRR (217 aa)). SIS domains lie at 286–426 (AAEI…QQGR) and 459–600 (LATD…VDQP). Lys605 functions as the For Fru-6P isomerization activity in the catalytic mechanism.

In terms of assembly, homodimer.

Its subcellular location is the cytoplasm. The catalysed reaction is D-fructose 6-phosphate + L-glutamine = D-glucosamine 6-phosphate + L-glutamate. Catalyzes the first step in hexosamine metabolism, converting fructose-6P into glucosamine-6P using glutamine as a nitrogen source. This is Glutamine--fructose-6-phosphate aminotransferase [isomerizing] from Vibrio vulnificus (strain YJ016).